A 427-amino-acid chain; its full sequence is MAKGFKLKELLSHQKEIEKAEKLENDLKKKKSQELKKEEPTIVTASNLKKLEKKEKKADVKKEVAADTEEYQSQALSKKEKRKLKKELKKMQEQDATEAQKHMSGDEDESGDDREEEEEEEEEEEGRLDLEKLAKSDSESEDDSESENDSEEDEDVVAKEESEEKEEQEEEQDVPLSDVEFDSDADVVPHHKLTVNNTKAMKHALERVQLPWKKHSFQEHQSVTSETNTDEHIKDIYDDTERELAFYKQSLDAVLVARDELKRLKVPFKRPLDYFAEMVKSDEHMDKIKGKLIEEASDKKAREEARRQRQLKKFGKQVQNATLQKRQLEKRETLEKIKSLKNKRKHNEIDHSEFNVGVEEEVEGKRFDRGRPNGKRAAKNAKYGQGGMKRFKRKNDATSSADVSGFSSRKMKGKTNRPGKSRRARRF.

2 stretches are compositionally biased toward basic and acidic residues: residues 29-40 (KKKSQELKKEEP) and 49-65 (KKLEKKEKKADVKKEVA). A disordered region spans residues 29–190 (KKKSQELKKE…FDSDADVVPH (162 aa)). The stretch at 45–174 (ASNLKKLEKK…KEEQEEEQDV (130 aa)) forms a coiled coil. Basic residues predominate over residues 79-88 (KEKRKLKKEL). Basic and acidic residues predominate over residues 89 to 105 (KKMQEQDATEAQKHMSG). Ser104 carries the phosphoserine modification. The segment covering 106–126 (DEDESGDDREEEEEEEEEEEG) has biased composition (acidic residues). Over residues 127 to 138 (RLDLEKLAKSDS) the composition is skewed to basic and acidic residues. Acidic residues-rich tracts occupy residues 139-155 (ESEDDSESENDSEEDED) and 163-185 (EEKEEQEEEQDVPLSDVEFDSDA). Residues Ser177 and Ser183 each carry the phosphoserine modification. Coiled-coil stretches lie at residues 234-265 (KDIYDDTERELAFYKQSLDAVLVARDELKRLK) and 291-348 (KLIE…KHNE). A disordered region spans residues 361–427 (EVEGKRFDRG…PGKSRRARRF (67 aa)). The segment covering 397–407 (ATSSADVSGFS) has biased composition (polar residues). Residues 409 to 427 (RKMKGKTNRPGKSRRARRF) show a composition bias toward basic residues.

It belongs to the EBP2 family. Interacts with LOC1, NOP12, SIZ2, ULS1 and WSS1. Sumoylated.

The protein localises to the nucleus. The protein resides in the nucleolus. Its function is as follows. Required for the processing of the 27S pre-rRNA. Probably involved in the step of the processing of the 27 SA precursor into the 27 SB intermediate. The chain is rRNA-processing protein EBP2 (EBP2) from Saccharomyces cerevisiae (strain ATCC 204508 / S288c) (Baker's yeast).